Reading from the N-terminus, the 96-residue chain is Signal recognition particle 19 kDa protein (96 aa).

Belongs to the SRP19 family. Part of the signal recognition particle protein translocation system, which is composed of SRP and FtsY. Archaeal SRP consists of a 7S RNA molecule of 300 nucleotides and two protein subunits: SRP54 and SRP19.

The protein localises to the cytoplasm. Its function is as follows. Involved in targeting and insertion of nascent membrane proteins into the cytoplasmic membrane. Binds directly to 7S RNA and mediates binding of the 54 kDa subunit of the SRP. The chain is Signal recognition particle 19 kDa protein from Pyrobaculum arsenaticum (strain DSM 13514 / JCM 11321 / PZ6).